A 478-amino-acid chain; its full sequence is Mannose-1-phosphate guanylyltransferase (478 aa).

This sequence belongs to the mannose-6-phosphate isomerase type 2 family.

The enzyme catalyses alpha-D-mannose 1-phosphate + GTP + H(+) = GDP-alpha-D-mannose + diphosphate. Its pathway is nucleotide-sugar biosynthesis; GDP-alpha-D-mannose biosynthesis; GDP-alpha-D-mannose from alpha-D-mannose 1-phosphate (GTP route): step 1/1. Involved in the biosynthesis of the capsular polysaccharide colanic acid. The chain is Mannose-1-phosphate guanylyltransferase (manC) from Escherichia coli (strain K12).